The primary structure comprises 576 residues: Sulfite reductase [NADPH] hemoprotein beta-component (576 aa).

[4Fe-4S] cluster is bound by residues Cys439, Cys445, Cys485, and Cys489. Cys489 is a siroheme binding site.

This sequence belongs to the nitrite and sulfite reductase 4Fe-4S domain family. Alpha(8)-beta(8). The alpha component is a flavoprotein, the beta component is a hemoprotein. Requires siroheme as cofactor. [4Fe-4S] cluster serves as cofactor.

The catalysed reaction is hydrogen sulfide + 3 NADP(+) + 3 H2O = sulfite + 3 NADPH + 4 H(+). The protein operates within sulfur metabolism; hydrogen sulfide biosynthesis; hydrogen sulfide from sulfite (NADPH route): step 1/1. Functionally, component of the sulfite reductase complex that catalyzes the 6-electron reduction of sulfite to sulfide. This is one of several activities required for the biosynthesis of L-cysteine from sulfate. The protein is Sulfite reductase [NADPH] hemoprotein beta-component of Aliivibrio fischeri (strain ATCC 700601 / ES114) (Vibrio fischeri).